The chain runs to 175 residues: ATP-dependent protease subunit HslV (175 aa).

The active site involves threonine 5. Na(+)-binding residues include glycine 160, aspartate 163, and threonine 166.

It belongs to the peptidase T1B family. HslV subfamily. In terms of assembly, a double ring-shaped homohexamer of HslV is capped on each side by a ring-shaped HslU homohexamer. The assembly of the HslU/HslV complex is dependent on binding of ATP.

Its subcellular location is the cytoplasm. It carries out the reaction ATP-dependent cleavage of peptide bonds with broad specificity.. Allosterically activated by HslU binding. Functionally, protease subunit of a proteasome-like degradation complex believed to be a general protein degrading machinery. This Myxococcus xanthus protein is ATP-dependent protease subunit HslV.